Here is a 100-residue protein sequence, read N- to C-terminus: MHLTAREQEKLLIVVAADVARRRKERGVKLNHPEAVAYITAELMEGARDGKTVAELMSEGQQYLTRDDVMEGVPEMISDVQVEATFPDGTKLVTVHNPIR.

This sequence belongs to the urease gamma subunit family. Heterotrimer of UreA (gamma), UreB (beta) and UreC (alpha) subunits. Three heterotrimers associate to form the active enzyme.

The protein localises to the cytoplasm. The enzyme catalyses urea + 2 H2O + H(+) = hydrogencarbonate + 2 NH4(+). The protein operates within nitrogen metabolism; urea degradation; CO(2) and NH(3) from urea (urease route): step 1/1. In Corynebacterium urealyticum (strain ATCC 43042 / DSM 7109), this protein is Urease subunit gamma.